The sequence spans 487 residues: Reticulon-like protein B21 (487 aa).

A compositionally biased stretch (low complexity) spans 1-22 (MTPRRSLSSSDSNDKSPSVSVV). 3 disordered regions span residues 1–43 (MTPR…PGRV), 65–86 (LRKVNSLPSPNSEKSDTKTEQE), and 113–149 (KSNENEQIDNGDQEIGDQDDYEEDGDEEEEREVEKKS). The span at 26-38 (ARSESVEGIEKKT) shows a compositional bias: basic and acidic residues. Acidic residues predominate over residues 118-143 (EQIDNGDQEIGDQDDYEEDGDEEEER). Positions 230–419 (LVDLVMWRDV…FTLVWNLSSV (190 aa)) constitute a Reticulon domain. 4 consecutive transmembrane segments (helical) span residues 242 to 262 (STLVFGFGTFLIISSSYANDL), 264 to 284 (FSFISVVAYMGLIYLGLMFVL), 354 to 374 (ITLWNLAKFGFLGAFTIPKIF), and 413 to 433 (VWNLSSVTARVWAAFMLLVAF). Residues 446–463 (QADDDEDDNEEEEAEEEK) show a composition bias toward acidic residues. Positions 446-487 (QADDDEDDNEEEEAEEEKEQVPPKHKRAPPHMMMPNKLKKIS) are disordered.

The protein resides in the endoplasmic reticulum membrane. The polypeptide is Reticulon-like protein B21 (RTNLB21) (Arabidopsis thaliana (Mouse-ear cress)).